The sequence spans 320 residues: ATP-dependent 6-phosphofructokinase (320 aa).

ATP contacts are provided by residues glycine 12, 73–74 (RF), and 103–106 (GDGS). Aspartate 104 lines the Mg(2+) pocket. 126–128 (TID) contacts substrate. The active-site Proton acceptor is the aspartate 128. Arginine 155 is a binding site for ADP. Residues arginine 163 and 170 to 172 (MGR) contribute to the substrate site. Residues 186-188 (GCE) and lysine 212 each bind ADP. Substrate is bound by residues glutamate 223, arginine 244, and 250 to 253 (HIQR).

This sequence belongs to the phosphofructokinase type A (PFKA) family. ATP-dependent PFK group I subfamily. Prokaryotic clade 'B1' sub-subfamily. Homotetramer. The cofactor is Mg(2+).

Its subcellular location is the cytoplasm. The enzyme catalyses beta-D-fructose 6-phosphate + ATP = beta-D-fructose 1,6-bisphosphate + ADP + H(+). Its pathway is carbohydrate degradation; glycolysis; D-glyceraldehyde 3-phosphate and glycerone phosphate from D-glucose: step 3/4. With respect to regulation, allosterically activated by ADP and other diphosphonucleosides, and allosterically inhibited by phosphoenolpyruvate. Catalyzes the phosphorylation of D-fructose 6-phosphate to fructose 1,6-bisphosphate by ATP, the first committing step of glycolysis. This chain is ATP-dependent 6-phosphofructokinase, found in Buchnera aphidicola subsp. Cinara cedri (strain Cc).